A 258-amino-acid polypeptide reads, in one-letter code: MKITKLEKKKRLYLMELDNGDKCYITEDTIVRFMLSRDKVISEEELKEIQDFAQFSYGKNLALYHLSFKARTEKEVREYLKKYDIDKNIVSQVIANLKEDKWINDGQYAYAIINANQLSGDKGPYVLTQKLAQKGISKSTIEEILNDFDFSEVAQRVANKLLKKYEGKLPARALQDKIIQNLTNKGFSYSDAKIAFDDLDSQVDQETTQELIFKELDKQYTKYARKYEGYELKQRLTQVLARKGYDFSDIASALREYL.

Belongs to the RecX family.

It is found in the cytoplasm. Functionally, modulates RecA activity. The chain is Regulatory protein RecX from Streptococcus pneumoniae serotype 19F (strain G54).